The sequence spans 567 residues: Hexose transporter HXT15 (567 aa).

Over residues 1–19 the composition is skewed to polar residues; the sequence is MASEQSSPEINADNLNSSA. The disordered stretch occupies residues 1–32; that stretch reads MASEQSSPEINADNLNSSAADVHVQPPGEKEW. Residues 1–55 lie on the Cytoplasmic side of the membrane; that stretch reads MASEQSSPEINADNLNSSAADVHVQPPGEKEWSDGFYDKEVINGNTPDAPKRGFL. Residues 56–76 traverse the membrane as a helical segment; it reads GYLIIYLLCYPVSFGGFLPGW. Over 77 to 112 the chain is Extracellular; it reads DSGITAGFINMDNFKMNFGSYKHSTGEYYLSNVRMG. Residues 113–133 traverse the membrane as a helical segment; sequence LLVAMFSVGCSIGGVAFARLA. Over 134 to 139 the chain is Cytoplasmic; it reads DTLGRR. Residues 140 to 160 traverse the membrane as a helical segment; sequence LAIVIVVLVYMVGAIIQISSN. Topologically, residues 161 to 170 are extracellular; the sequence is HKWYQYFVGK. The helical transmembrane segment at 171–191 threads the bilayer; that stretch reads IIYGLGAGGCSVLCPMLLSEI. Residues 192 to 197 are Cytoplasmic-facing; that stretch reads APTDLR. The helical transmembrane segment at 198-218 threads the bilayer; it reads GGLVSLYQLNMTFGIFLGYCS. The Extracellular segment spans residues 219-232; sequence VYGTRKYSNTAQWR. A helical transmembrane segment spans residues 233 to 253; sequence IPVGLCFLWALIIIVGMLLVP. Residues 254–336 lie on the Cytoplasmic side of the membrane; it reads ESPRYLIECE…VQTFLQLTGE (83 aa). A helical transmembrane segment spans residues 337–353; that stretch reads NYFFFYGTTIFKSVGLT. Residues 354–359 lie on the Extracellular side of the membrane; the sequence is DGFETS. Residues 360–377 traverse the membrane as a helical segment; it reads IVLGTVNFFSTIIAVMVV. Residues 378-384 lie on the Cytoplasmic side of the membrane; that stretch reads DKIGRRK. A helical transmembrane segment spans residues 385-405; it reads CLLFGAASMMACMVIFASIGV. Topologically, residues 406 to 427 are extracellular; the sequence is KCLYPHGQDGPSSKGAGNAMIV. A helical membrane pass occupies residues 428-448; that stretch reads FTCFYIFCFATTWAPVAYIVV. Topologically, residues 449–465 are cytoplasmic; sequence AESFPSKVKSKAMSIST. Residues 466-486 traverse the membrane as a helical segment; the sequence is AFNWLWQFLIGFFTPFITGSI. His487 is a topological domain (extracellular). The chain crosses the membrane as a helical span at residues 488-508; the sequence is FYYGYVFVGCLVAMFLYVFFF. Topologically, residues 509 to 567 are cytoplasmic; the sequence is LPETIGLSLEEIQLLYEEGIKPWKSASWVPPSRRGASSRETEAKKKSWKEVLKFPKSFN. Residues 533 to 555 form a disordered region; sequence SASWVPPSRRGASSRETEAKKKS. Basic and acidic residues predominate over residues 545 to 555; that stretch reads SSRETEAKKKS.

Belongs to the major facilitator superfamily. Sugar transporter (TC 2.A.1.1) family.

It is found in the membrane. Probable glucose transporter. The chain is Hexose transporter HXT15 (HXT15) from Saccharomyces cerevisiae (strain ATCC 204508 / S288c) (Baker's yeast).